Consider the following 665-residue polypeptide: tRNA 5-methylaminomethyl-2-thiouridine biosynthesis bifunctional protein MnmC (665 aa).

The tRNA (mnm(5)s(2)U34)-methyltransferase stretch occupies residues 1 to 243; the sequence is MSQTSLHHAR…KREMLAGERA (243 aa). The interval 268–665 is FAD-dependent cmnm(5)s(2)U34 oxidoreductase; sequence IGGGIASAMT…RKLLKGKPLQ (398 aa).

The protein in the N-terminal section; belongs to the methyltransferase superfamily. tRNA (mnm(5)s(2)U34)-methyltransferase family. It in the C-terminal section; belongs to the DAO family. It depends on FAD as a cofactor.

The protein resides in the cytoplasm. The catalysed reaction is 5-aminomethyl-2-thiouridine(34) in tRNA + S-adenosyl-L-methionine = 5-methylaminomethyl-2-thiouridine(34) in tRNA + S-adenosyl-L-homocysteine + H(+). Catalyzes the last two steps in the biosynthesis of 5-methylaminomethyl-2-thiouridine (mnm(5)s(2)U) at the wobble position (U34) in tRNA. Catalyzes the FAD-dependent demodification of cmnm(5)s(2)U34 to nm(5)s(2)U34, followed by the transfer of a methyl group from S-adenosyl-L-methionine to nm(5)s(2)U34, to form mnm(5)s(2)U34. The chain is tRNA 5-methylaminomethyl-2-thiouridine biosynthesis bifunctional protein MnmC from Aeromonas hydrophila subsp. hydrophila (strain ATCC 7966 / DSM 30187 / BCRC 13018 / CCUG 14551 / JCM 1027 / KCTC 2358 / NCIMB 9240 / NCTC 8049).